The following is a 186-amino-acid chain: Protein FAM9B (186 aa).

The segment at 1 to 93 is disordered; sequence MAAWGKKHAG…KHALRKKQLK (93 aa). 2 stretches are compositionally biased toward basic and acidic residues: residues 10 to 27 and 34 to 58; these read GKDP…FTET and DEHG…KPED. Basic residues predominate over residues 66–93; the sequence is KRKRMKMDKTCSKTKNKSKHALRKKQLK.

Belongs to the XLR/SYCP3 family. In terms of tissue distribution, expressed in testis and ovary (at protein level).

The protein localises to the nucleus. It localises to the cytoplasm. Its subcellular location is the chromosome. Functionally, may play a role in meiosis. This chain is Protein FAM9B, found in Homo sapiens (Human).